Consider the following 429-residue polypeptide: Phosphoribosylamine--glycine ligase (429 aa).

Residues 109–316 enclose the ATP-grasp domain; it reads KDFLARHNIP…LVELCLAACE (208 aa). 135–196 lines the ATP pocket; the sequence is LREKGAPIVI…EEFLDGEEAS (62 aa). The segment at 212–236 is disordered; that stretch reads SQDHKRVGDKDTGPNTGGMGAYSPA. A compositionally biased stretch (basic and acidic residues) spans 213–223; sequence QDHKRVGDKDT. Residues E286 and N288 each contribute to the Mg(2+) site.

This sequence belongs to the GARS family. In terms of assembly, monomer. Mg(2+) is required as a cofactor. The cofactor is Mn(2+).

The enzyme catalyses 5-phospho-beta-D-ribosylamine + glycine + ATP = N(1)-(5-phospho-beta-D-ribosyl)glycinamide + ADP + phosphate + H(+). It functions in the pathway purine metabolism; IMP biosynthesis via de novo pathway; N(1)-(5-phospho-D-ribosyl)glycinamide from 5-phospho-alpha-D-ribose 1-diphosphate: step 2/2. This Escherichia coli O6:H1 (strain CFT073 / ATCC 700928 / UPEC) protein is Phosphoribosylamine--glycine ligase.